A 341-amino-acid polypeptide reads, in one-letter code: UDP-3-O-(3-hydroxymyristoyl)glucosamine N-acyltransferase (341 aa).

His239 serves as the catalytic Proton acceptor.

The protein belongs to the transferase hexapeptide repeat family. LpxD subfamily. In terms of assembly, homotrimer.

The catalysed reaction is a UDP-3-O-[(3R)-3-hydroxyacyl]-alpha-D-glucosamine + a (3R)-hydroxyacyl-[ACP] = a UDP-2-N,3-O-bis[(3R)-3-hydroxyacyl]-alpha-D-glucosamine + holo-[ACP] + H(+). The enzyme catalyses UDP-3-O-[(3R)-3-hydroxytetradecanoyl]-alpha-D-glucosamine + (3R)-hydroxytetradecanoyl-[ACP] = UDP-2-N,3-O-bis[(3R)-3-hydroxytetradecanoyl]-alpha-D-glucosamine + holo-[ACP] + H(+). Its pathway is glycolipid biosynthesis; lipid IV(A) biosynthesis; lipid IV(A) from (3R)-3-hydroxytetradecanoyl-[acyl-carrier-protein] and UDP-N-acetyl-alpha-D-glucosamine: step 3/6. Its function is as follows. Catalyzes the N-acylation of UDP-3-O-(hydroxytetradecanoyl)glucosamine using 3-hydroxytetradecanoyl-ACP as the acyl donor. Is involved in the biosynthesis of lipid A, a phosphorylated glycolipid that anchors the lipopolysaccharide to the outer membrane of the cell. This chain is UDP-3-O-(3-hydroxymyristoyl)glucosamine N-acyltransferase, found in Escherichia coli (strain UTI89 / UPEC).